Here is a 297-residue protein sequence, read N- to C-terminus: Ribosomal RNA small subunit methyltransferase H (297 aa).

Residues 37–39 (GGH), Glu-56, Phe-87, Asp-102, and His-109 each bind S-adenosyl-L-methionine.

Belongs to the methyltransferase superfamily. RsmH family.

Its subcellular location is the cytoplasm. The catalysed reaction is cytidine(1402) in 16S rRNA + S-adenosyl-L-methionine = N(4)-methylcytidine(1402) in 16S rRNA + S-adenosyl-L-homocysteine + H(+). Functionally, specifically methylates the N4 position of cytidine in position 1402 (C1402) of 16S rRNA. The sequence is that of Ribosomal RNA small subunit methyltransferase H from Borrelia hermsii (strain HS1 / DAH).